The following is a 492-amino-acid chain: MNFTQDLRLLLKSRYPIIVINTREEDRLEYIIKHSLNCSNSQQVYSWDFVDGYTNNPSDNGYAKRNPLLALEFIENLNNESLNLFLLKDFDSFLNEIVLIRKLRNLAKIIKTQSKHIIIISCKINIPFALNDIITVIDLPLPSLLEIKKEIIRLSKALNLNLNSELVNNITKSCQGLSIDRIRKVITKIIAQYNQIDSRSLPIIIEEKRQIINQTHLLEFYPYSKVNRDIGGLDVLKQWLQKRSRSFSKQSLNYGIPSPKGLLLVGIQGTGKSLTAKAIASDWMLPLLRLDMGKLFGGLVGESESKMREMINISEGLSPCILWIDEIDKAFSGLHSQGDSGTSARVFGTFITWLSEKKAPVFVVATANKIQSLPSEMLRKGRFDEIFFLDLPNRQERESIFKIHLSKVRPRSWQKYDIHELSLLCNKFSGAEIEQAIIESMHTAFSEEREFSTEDIKIAIKQFVPLAFTDKEQVESLQAWAGDGRARNASLT.

Residue 266–273 (GIQGTGKS) coordinates ATP.

The protein belongs to the AAA ATPase family. Highly divergent.

The protein localises to the plastid. It is found in the chloroplast. This is an uncharacterized protein from Pyropia yezoensis (Susabi-nori).